Consider the following 409-residue polypeptide: Cuticle-degrading serine protease (409 aa).

Positions 1–21 (MLTNGLISLLAIAGLATNAFA) are cleaved as a signal peptide. Positions 22–123 (GPIRKVSNAG…VEQDTVVTTY (102 aa)) are excised as a propeptide. Residues 39 to 122 (KYIVVLKKGL…YVEQDTVVTT (84 aa)) enclose the Inhibitor I9 domain. The Peptidase S8 domain occupies 130–409 (TWGLDRISHE…PNKIAYNGYA (280 aa)). Aspartate 164 acts as the Charge relay system in catalysis. The N-linked (GlcNAc...) asparagine glycan is linked to asparagine 178. Histidine 200 (charge relay system) is an active-site residue. A glycan (N-linked (GlcNAc...) asparagine) is linked at asparagine 252. Catalysis depends on serine 353, which acts as the Charge relay system.

The protein belongs to the peptidase S8 family.

The protein resides in the secreted. With respect to regulation, inhibited by PMSF, SSI, the peptide Phe-Val and by Phe, but not by EDTA. Its function is as follows. Hydrolyzes gelatin, casein, the chromogenic substrate azocoll and the cuticle of the nematode P.redivivus. Immobilizes P.redivivus. The polypeptide is Cuticle-degrading serine protease (Arthrobotrys oligospora (strain ATCC 24927 / CBS 115.81 / DSM 1491) (Nematode-trapping fungus)).